A 231-amino-acid chain; its full sequence is Probable pyridoxamine 5'-phosphate oxidase (231 aa).

20 to 23 (QYEK) serves as a coordination point for pyridoxal 5'-phosphate. Residue 74–77 (RLVL) participates in FMN binding. A pyridoxal 5'-phosphate-binding site is contributed by K79. Residues 89–90 (FT), 96–97 (KK), and Q119 contribute to the FMN site. Pyridoxal 5'-phosphate is bound by residues Y137, R141, and S145. Residues 154-155 (QS) and W202 contribute to the FMN site. A pyridoxal 5'-phosphate-binding site is contributed by 208-210 (RLH). R212 lines the FMN pocket.

This sequence belongs to the pyridoxamine 5'-phosphate oxidase family. Homodimer. FMN is required as a cofactor.

It carries out the reaction pyridoxamine 5'-phosphate + O2 + H2O = pyridoxal 5'-phosphate + H2O2 + NH4(+). The catalysed reaction is pyridoxine 5'-phosphate + O2 = pyridoxal 5'-phosphate + H2O2. It functions in the pathway cofactor metabolism; pyridoxal 5'-phosphate salvage; pyridoxal 5'-phosphate from pyridoxamine 5'-phosphate: step 1/1. The protein operates within cofactor metabolism; pyridoxal 5'-phosphate salvage; pyridoxal 5'-phosphate from pyridoxine 5'-phosphate: step 1/1. Functionally, catalyzes the oxidation of either pyridoxine 5'-phosphate (PNP) or pyridoxamine 5'-phosphate (PMP) into pyridoxal 5'-phosphate (PLP). This chain is Probable pyridoxamine 5'-phosphate oxidase, found in Schizosaccharomyces pombe (strain 972 / ATCC 24843) (Fission yeast).